We begin with the raw amino-acid sequence, 416 residues long: NADH-quinone oxidoreductase subunit D (416 aa).

It belongs to the complex I 49 kDa subunit family. NDH-1 is composed of 14 different subunits. Subunits NuoB, C, D, E, F, and G constitute the peripheral sector of the complex.

The protein resides in the cell inner membrane. It catalyses the reaction a quinone + NADH + 5 H(+)(in) = a quinol + NAD(+) + 4 H(+)(out). NDH-1 shuttles electrons from NADH, via FMN and iron-sulfur (Fe-S) centers, to quinones in the respiratory chain. The immediate electron acceptor for the enzyme in this species is believed to be ubiquinone. Couples the redox reaction to proton translocation (for every two electrons transferred, four hydrogen ions are translocated across the cytoplasmic membrane), and thus conserves the redox energy in a proton gradient. This Gluconacetobacter diazotrophicus (strain ATCC 49037 / DSM 5601 / CCUG 37298 / CIP 103539 / LMG 7603 / PAl5) protein is NADH-quinone oxidoreductase subunit D.